The sequence spans 79 residues: Small ribosomal subunit protein bS18 (79 aa).

This sequence belongs to the bacterial ribosomal protein bS18 family. As to quaternary structure, part of the 30S ribosomal subunit. Forms a tight heterodimer with protein bS6.

Functionally, binds as a heterodimer with protein bS6 to the central domain of the 16S rRNA, where it helps stabilize the platform of the 30S subunit. The protein is Small ribosomal subunit protein bS18 of Aster yellows witches'-broom phytoplasma (strain AYWB).